The primary structure comprises 139 residues: Thyrotropin subunit beta (139 aa).

An N-terminal signal peptide occupies residues Met-1–Pro-20. 6 cysteine pairs are disulfide-bonded: Cys-22–Cys-72, Cys-36–Cys-87, Cys-39–Cys-127, Cys-47–Cys-103, Cys-51–Cys-105, and Cys-108–Cys-115. A glycan (N-linked (GlcNAc...) asparagine) is linked at Asn-43.

It belongs to the glycoprotein hormones subunit beta family. In terms of assembly, heterodimer of a common alpha chain and a unique beta chain which confers biological specificity to thyrotropin, lutropin, follitropin and gonadotropin.

The protein resides in the secreted. Indispensable for the control of thyroid structure and metabolism. May play some role in the biological processes of the immature fishes. This Salmo salar (Atlantic salmon) protein is Thyrotropin subunit beta (tshb).